A 204-amino-acid polypeptide reads, in one-letter code: Protein DESIGUAL 4 (204 aa).

Transmembrane regions (helical) follow at residues isoleucine 13–phenylalanine 33, phenylalanine 60–isoleucine 80, cysteine 107–tryptophan 127, and valine 143–isoleucine 163. Residues lysine 177–proline 204 are disordered. Residue asparagine 179 is glycosylated (N-linked (GlcNAc...) asparagine).

Belongs to the DESIGUAL family. In terms of tissue distribution, only expressed in inflorescences.

The protein localises to the endoplasmic reticulum membrane. The sequence is that of Protein DESIGUAL 4 from Arabidopsis thaliana (Mouse-ear cress).